Here is a 155-residue protein sequence, read N- to C-terminus: Telokin-like protein 20 homolog (155 aa).

The interval 109–155 (KRAVAPPHHEPEPVPAEEGAVADRAEPESGDAPPSPKKQKLDEREQD) is disordered.

The polypeptide is Telokin-like protein 20 homolog (Orgyia pseudotsugata multicapsid polyhedrosis virus (OpMNPV)).